A 296-amino-acid chain; its full sequence is NAD kinase (296 aa).

The active-site Proton acceptor is the Asp72. Residues 72 to 73 (DG), 146 to 147 (ND), Arg157, Lys174, Asp176, 187 to 192 (TAYALS), and Gln247 each bind NAD(+).

Belongs to the NAD kinase family. The cofactor is a divalent metal cation.

It is found in the cytoplasm. It catalyses the reaction NAD(+) + ATP = ADP + NADP(+) + H(+). Its function is as follows. Involved in the regulation of the intracellular balance of NAD and NADP, and is a key enzyme in the biosynthesis of NADP. Catalyzes specifically the phosphorylation on 2'-hydroxyl of the adenosine moiety of NAD to yield NADP. This is NAD kinase from Pseudomonas syringae pv. tomato (strain ATCC BAA-871 / DC3000).